The sequence spans 701 residues: Pseudouridylate synthase PUS7L (701 aa).

Residue Ser79 is modified to Phosphoserine. Catalysis depends on Asp339, which acts as the Nucleophile. One can recognise a TRUD domain in the interval 424 to 647 (GFVNYYGPQR…PGCYRQILKH (224 aa)).

The protein belongs to the pseudouridine synthase TruD family.

The catalysed reaction is a uridine in mRNA = a pseudouridine in mRNA. Functionally, pseudouridine synthase that catalyzes pseudouridylation of mRNAs. The polypeptide is Pseudouridylate synthase PUS7L (Homo sapiens (Human)).